Reading from the N-terminus, the 662-residue chain is p-hydroxybenzoic acid efflux pump subunit AaeB (662 aa).

The next 11 helical transmembrane spans lie at 22 to 42 (FAFKLSFAIVLSLFLGFHLQL), 52 to 72 (AAIVAAGPAFAAGGEPFSGAI), 76 to 96 (GMLRIIGTFIGCIGALVIIIA), 102 to 122 (VVMLMLCCIWAGLCTWVSSLV), 129 to 149 (IFGLAGYTALIIIVSTQGTPL), 161 to 181 (EIVLGIVCAILADLLFSPRSI), 378 to 398 (LFWLSTGWTSGSVCMVMIAVV), 415 to 435 (FLFGTIYALPLGALMFMFIMP), 439 to 459 (QSMLLLCLSLGGMAFFLGLEV), 465 to 485 (GSLGALASTINILVLDNPMTF), and 491 to 511 (LDSAIGQIIGCFLALMVIMLI).

The protein belongs to the aromatic acid exporter ArAE (TC 2.A.85) family.

The protein resides in the cell inner membrane. Its function is as follows. Forms an efflux pump with AaeA. Could function as a metabolic relief valve, allowing to eliminate certain compounds when they accumulate to high levels in the cell. This is p-hydroxybenzoic acid efflux pump subunit AaeB from Pectobacterium atrosepticum (strain SCRI 1043 / ATCC BAA-672) (Erwinia carotovora subsp. atroseptica).